The primary structure comprises 181 residues: Protein canopy homolog 1 (181 aa).

Residues 1–21 (MAILLHFGVLITAFLSSHVEG) form the signal peptide. One can recognise a Saposin B-type domain in the interval 25–177 (PILYCGACRA…EETGLCKEYL (153 aa)). 3 disulfides stabilise this stretch: Cys-29/Cys-173, Cys-32/Cys-166, and Cys-87/Cys-139. Positions 178–181 (HNEL) match the Prevents secretion from ER motif.

The protein belongs to the canopy family.

It is found in the endoplasmic reticulum. Functionally, plays an role in early embryonic development. The protein is Protein canopy homolog 1 (cnpy1) of Xenopus laevis (African clawed frog).